We begin with the raw amino-acid sequence, 367 residues long: Hyaluronidase (367 aa).

2 disulfide bridges follow: Cys48–Cys337 and Cys214–Cys226. Residue Asn108 is glycosylated (N-linked (GlcNAc...) asparagine). The active-site Proton donor is the Glu138. An N-linked (GlcNAc...) asparagine glycan is attached at Asn354.

It belongs to the glycosyl hydrolase 56 family.

It catalyses the reaction Random hydrolysis of (1-&gt;4)-linkages between N-acetyl-beta-D-glucosamine and D-glucuronate residues in hyaluronate.. May play a role in reproduction. This chain is Hyaluronidase, found in Polistes annularis (Paper wasp).